Consider the following 122-residue polypeptide: Large ribosomal subunit protein uL14 (122 aa).

This sequence belongs to the universal ribosomal protein uL14 family. As to quaternary structure, part of the 50S ribosomal subunit. Forms a cluster with proteins L3 and L19. In the 70S ribosome, L14 and L19 interact and together make contacts with the 16S rRNA in bridges B5 and B8.

Functionally, binds to 23S rRNA. Forms part of two intersubunit bridges in the 70S ribosome. The protein is Large ribosomal subunit protein uL14 of Microcystis aeruginosa (strain NIES-843 / IAM M-2473).